The following is a 572-amino-acid chain: M-phase inducer phosphatase 3 (572 aa).

Disordered regions lie at residues 95–117 (NLGD…GKLE) and 304–354 (SPSM…QRRG). Positions 420 to 527 (LVEKFFIIDC…FFPEYKELCE (108 aa)) constitute a Rhodanese domain. Residue cysteine 476 is part of the active site.

This sequence belongs to the MPI phosphatase family.

The enzyme catalyses O-phospho-L-tyrosyl-[protein] + H2O = L-tyrosyl-[protein] + phosphate. In terms of biological role, this protein functions as a dosage-dependent inducer in mitotic control. It is a tyrosine protein phosphatase required for progression of the cell cycle. It may directly dephosphorylate p34(cdc2) and activate the p34(cdc2) kinase activity. This Xenopus laevis (African clawed frog) protein is M-phase inducer phosphatase 3 (cdc25-3).